Reading from the N-terminus, the 1342-residue chain is DNA-directed RNA polymerase subunit beta (1342 aa).

The protein belongs to the RNA polymerase beta chain family. As to quaternary structure, the RNAP catalytic core consists of 2 alpha, 1 beta, 1 beta' and 1 omega subunit. When a sigma factor is associated with the core the holoenzyme is formed, which can initiate transcription.

The enzyme catalyses RNA(n) + a ribonucleoside 5'-triphosphate = RNA(n+1) + diphosphate. DNA-dependent RNA polymerase catalyzes the transcription of DNA into RNA using the four ribonucleoside triphosphates as substrates. This is DNA-directed RNA polymerase subunit beta from Colwellia psychrerythraea (strain 34H / ATCC BAA-681) (Vibrio psychroerythus).